Consider the following 55-residue polypeptide: ATP synthase small subunit 6-A, mitochondrial (55 aa).

A mitochondrion-targeting transit peptide spans 1 to 11 (MRLFDPWPVFF). The helical transmembrane segment at 21–39 (FLTGFAVTGVLITKLTAGL) threads the bilayer.

Belongs to the ATPase 6 subunit family.

It is found in the mitochondrion inner membrane. Its function is as follows. Mitochondrial membrane ATP synthase (F(1)F(0) ATP synthase or Complex V) produces ATP from ADP in the presence of a proton gradient across the membrane which is generated by electron transport complexes of the respiratory chain. F-type ATPases consist of two structural domains, F(1) - containing the extramembraneous catalytic core and F(0) - containing the membrane proton channel, linked together by a central stalk and a peripheral stalk. During catalysis, ATP synthesis in the catalytic domain of F(1) is coupled via a rotary mechanism of the central stalk subunits to proton translocation. Part of the complex F(0) domain. Confers tolerance to several abiotic stresses (e.g. salt, mannitol, drought, oxidative and cold stresses), probably by providing additional energy needed for cell homeostasis. The chain is ATP synthase small subunit 6-A, mitochondrial from Arabidopsis thaliana (Mouse-ear cress).